A 62-amino-acid polypeptide reads, in one-letter code: Photosystem II reaction center protein Z (62 aa).

Transmembrane regions (helical) follow at residues 8-28 and 41-61; these read AVFA…VVFA and FSGT…NSLI.

This sequence belongs to the PsbZ family. PSII is composed of 1 copy each of membrane proteins PsbA, PsbB, PsbC, PsbD, PsbE, PsbF, PsbH, PsbI, PsbJ, PsbK, PsbL, PsbM, PsbT, PsbY, PsbZ, Psb30/Ycf12, at least 3 peripheral proteins of the oxygen-evolving complex and a large number of cofactors. It forms dimeric complexes.

The protein localises to the plastid. It is found in the chloroplast thylakoid membrane. In terms of biological role, may control the interaction of photosystem II (PSII) cores with the light-harvesting antenna, regulates electron flow through the 2 photosystem reaction centers. PSII is a light-driven water plastoquinone oxidoreductase, using light energy to abstract electrons from H(2)O, generating a proton gradient subsequently used for ATP formation. The chain is Photosystem II reaction center protein Z from Amborella trichopoda.